Consider the following 150-residue polypeptide: MQIILLEKVTNLGNLGDIVRVKDGFARNFLIPQRKARRATEAAIADFAVRRAELEKLAAEKLAAAEAVGIKLKDMVLEIGQKAGVDGRLFGSVTNHDIADALKAKGFTIEKSSVRLPTGPLKMAGDHPVAVAVHTDVVADITIRVVGEQA.

It belongs to the bacterial ribosomal protein bL9 family.

Functionally, binds to the 23S rRNA. The protein is Large ribosomal subunit protein bL9 of Polynucleobacter necessarius subsp. necessarius (strain STIR1).